The chain runs to 248 residues: ATP synthase subunit a (248 aa).

A run of 7 helical transmembrane segments spans residues 29 to 49 (AMLT…CLFS), 85 to 105 (VFPF…QGLV), 115 to 135 (LIQT…IVLA), 143 to 163 (LFLP…IEIV), 176 to 196 (LFAN…VAWA), 201 to 221 (GGLL…LFGL), and 227 to 247 (LIQA…AIVL).

It belongs to the ATPase A chain family. In terms of assembly, F-type ATPases have 2 components, CF(1) - the catalytic core - and CF(0) - the membrane proton channel. CF(1) has five subunits: alpha(3), beta(3), gamma(1), delta(1), epsilon(1). CF(0) has three main subunits: a, b and c.

Its subcellular location is the mitochondrion inner membrane. Its function is as follows. Mitochondrial membrane ATP synthase (F(1)F(0) ATP synthase or Complex V) produces ATP from ADP in the presence of a proton gradient across the membrane which is generated by electron transport complexes of the respiratory chain. F-type ATPases consist of two structural domains, F(1) - containing the extramembraneous catalytic core and F(0) - containing the membrane proton channel, linked together by a central stalk and a peripheral stalk. During catalysis, ATP synthesis in the catalytic domain of F(1) is coupled via a rotary mechanism of the central stalk subunits to proton translocation. Key component of the proton channel; it may play a direct role in the translocation of protons across the membrane. In Pylaiella littoralis (Seaweed), this protein is ATP synthase subunit a (ATP6).